The sequence spans 418 residues: NADH-quinone oxidoreductase subunit D (418 aa).

The protein belongs to the complex I 49 kDa subunit family. As to quaternary structure, NDH-1 is composed of 14 different subunits. Subunits NuoB, C, D, E, F, and G constitute the peripheral sector of the complex.

It is found in the cell inner membrane. It carries out the reaction a quinone + NADH + 5 H(+)(in) = a quinol + NAD(+) + 4 H(+)(out). NDH-1 shuttles electrons from NADH, via FMN and iron-sulfur (Fe-S) centers, to quinones in the respiratory chain. The immediate electron acceptor for the enzyme in this species is believed to be ubiquinone. Couples the redox reaction to proton translocation (for every two electrons transferred, four hydrogen ions are translocated across the cytoplasmic membrane), and thus conserves the redox energy in a proton gradient. The polypeptide is NADH-quinone oxidoreductase subunit D (Neisseria meningitidis serogroup A / serotype 4A (strain DSM 15465 / Z2491)).